The primary structure comprises 288 residues: 4-diphosphocytidyl-2-C-methyl-D-erythritol kinase (288 aa).

The active site involves K11. 100-110 (PTSAGLGSGSS) serves as a coordination point for ATP. D140 is a catalytic residue.

It belongs to the GHMP kinase family. IspE subfamily.

The catalysed reaction is 4-CDP-2-C-methyl-D-erythritol + ATP = 4-CDP-2-C-methyl-D-erythritol 2-phosphate + ADP + H(+). It functions in the pathway isoprenoid biosynthesis; isopentenyl diphosphate biosynthesis via DXP pathway; isopentenyl diphosphate from 1-deoxy-D-xylulose 5-phosphate: step 3/6. Its function is as follows. Catalyzes the phosphorylation of the position 2 hydroxy group of 4-diphosphocytidyl-2C-methyl-D-erythritol. The chain is 4-diphosphocytidyl-2-C-methyl-D-erythritol kinase from Wolbachia sp. subsp. Brugia malayi (strain TRS).